A 235-amino-acid chain; its full sequence is V-type proton ATPase subunit E2 (235 aa).

Position 1 is an N-acetylmethionine (methionine 1). Residues 8–64 (KQIQQMVRFIRQEAEEKANEISISAEEEFNIERLQLLESAKRKLRQDYDRKLKQVDI) are a coiled coil.

Belongs to the V-ATPase E subunit family. As to quaternary structure, V-ATPase is a heteromultimeric enzyme composed of a peripheral catalytic V1 complex (components A to H) attached to an integral membrane V0 proton pore complex (components: a, c, c'', d and e).

It localises to the vacuole membrane. In terms of biological role, subunit of the peripheral V1 complex of vacuolar ATPase essential for assembly or catalytic function. V-ATPase is responsible for acidifying a variety of intracellular compartments in eukaryotic cells. This chain is V-type proton ATPase subunit E2 (VHA-E2), found in Arabidopsis thaliana (Mouse-ear cress).